The primary structure comprises 158 residues: Transcriptional repressor NrdR (158 aa).

A zinc finger lies at C3–C34. The ATP-cone domain maps to I49–H139.

It belongs to the NrdR family. It depends on Zn(2+) as a cofactor.

Negatively regulates transcription of bacterial ribonucleotide reductase nrd genes and operons by binding to NrdR-boxes. The chain is Transcriptional repressor NrdR from Kosmotoga olearia (strain ATCC BAA-1733 / DSM 21960 / TBF 19.5.1).